The sequence spans 440 residues: Adenylyltransferase and sulfurtransferase UBA4 (440 aa).

At Met1 the chain carries N-acetylmethionine. Residues Gly77, Asp98, 105–109, Lys122, and 166–167 each bind ATP; these read SNLHR and DS. Positions 208 and 211 each coordinate Zn(2+). Cys225 (glycyl thioester intermediate; for adenylyltransferase activity) is an active-site residue. Positions 286 and 289 each coordinate Zn(2+). The residue at position 326 (Ser326) is a Phosphoserine. The 100-residue stretch at 339 to 438 folds into the Rhodanese domain; that stretch reads FLAKHIFLDV…YIDDIDQTIP (100 aa). Residue Cys397 is the Cysteine persulfide intermediate; for sulfurtransferase activity of the active site.

It in the N-terminal section; belongs to the HesA/MoeB/ThiF family. UBA4 subfamily. It depends on Zn(2+) as a cofactor.

Its subcellular location is the cytoplasm. The protein localises to the cytosol. The protein operates within tRNA modification; 5-methoxycarbonylmethyl-2-thiouridine-tRNA biosynthesis. Plays a central role in 2-thiolation of mcm(5)S(2)U at tRNA wobble positions of cytosolic tRNA(Lys), tRNA(Glu) and tRNA(Gln). Acts by mediating the C-terminal thiocarboxylation of sulfur carrier URM1. Its N-terminus first activates URM1 as acyl-adenylate (-COAMP), then the persulfide sulfur on the catalytic cysteine is transferred to URM1 to form thiocarboxylation (-COSH) of its C-terminus. The reaction probably involves hydrogen sulfide that is generated from the persulfide intermediate and that acts as a nucleophile towards URM1. Subsequently, a transient disulfide bond is formed. Does not use thiosulfate as sulfur donor; NFS1 probably acting as a sulfur donor for thiocarboxylation reactions. Prior mcm(5) tRNA modification by the elongator complex is required for 2-thiolation. May also be involved in protein urmylation. The polypeptide is Adenylyltransferase and sulfurtransferase UBA4 (Saccharomyces cerevisiae (strain RM11-1a) (Baker's yeast)).